Consider the following 396-residue polypeptide: Ribosomal RNA large subunit methyltransferase I (396 aa).

One can recognise a PUA domain in the interval 2–81 (SVRLVLAKGR…ESIDIAFFTR (80 aa)).

Belongs to the methyltransferase superfamily. RlmI family.

It localises to the cytoplasm. The enzyme catalyses cytidine(1962) in 23S rRNA + S-adenosyl-L-methionine = 5-methylcytidine(1962) in 23S rRNA + S-adenosyl-L-homocysteine + H(+). In terms of biological role, specifically methylates the cytosine at position 1962 (m5C1962) of 23S rRNA. This is Ribosomal RNA large subunit methyltransferase I from Escherichia coli O127:H6 (strain E2348/69 / EPEC).